Consider the following 534-residue polypeptide: Chaperonin GroEL 3 (534 aa).

Residues 31 to 34 (TLGP), glycine 416, 479 to 481 (NAL), and aspartate 495 contribute to the ATP site.

It belongs to the chaperonin (HSP60) family. As to quaternary structure, forms a cylinder of 14 subunits composed of two heptameric rings stacked back-to-back. Interacts with the co-chaperonin GroES.

The protein resides in the cytoplasm. It carries out the reaction ATP + H2O + a folded polypeptide = ADP + phosphate + an unfolded polypeptide.. In terms of biological role, together with its co-chaperonin GroES, plays an essential role in assisting protein folding. The GroEL-GroES system forms a nano-cage that allows encapsulation of the non-native substrate proteins and provides a physical environment optimized to promote and accelerate protein folding. The polypeptide is Chaperonin GroEL 3 (Protochlamydia amoebophila (strain UWE25)).